The following is a 512-amino-acid chain: Centrosomal protein CCDC61 (512 aa).

M1 is subject to N-acetylmethionine. The tract at residues 1 to 143 (MDQPAGLQVD…PLPLPYQGKP (143 aa)) is head domain. 2 coiled-coil regions span residues 178–205 (IWHL…SREE) and 248–275 (CRRL…LTSE). A disordered region spans residues 276-477 (LALYKRGRRT…KSLANSGGWV (202 aa)). Position 285 is a phosphothreonine (T285). Over residues 293 to 306 (TREDRASSSRERSA) the composition is skewed to basic and acidic residues. A phosphoserine mark is found at S334, S336, S373, and S376. The span at 407–425 (RSSSVDSFRSRCSSASSCS) shows a compositional bias: low complexity. Phosphoserine occurs at positions 447 and 473.

This sequence belongs to the CCDC61 family. Forms homodimers (via head domain). Interacts with CEP170. Interacts with PCM1 and CEP131. Binds tubulin.

It is found in the cytoplasm. It localises to the cytoskeleton. The protein localises to the microtubule organizing center. Its subcellular location is the centrosome. The protein resides in the centriolar satellite. It is found in the cilium basal body. Microtubule-binding centrosomal protein required for centriole cohesion, independently of the centrosome-associated protein/CEP250 and rootletin/CROCC linker. In interphase, required for anchoring microtubule at the mother centriole subdistal appendages and for centrosome positioning. During mitosis, may be involved in spindle assembly and chromatin alignment by regulating the organization of spindle microtubules into a symmetrical structure. Has been proposed to play a role in CEP170 recruitment to centrosomes. However, this function could not be confirmed. Plays a non-essential role in ciliogenesis. This chain is Centrosomal protein CCDC61, found in Homo sapiens (Human).